The following is a 62-amino-acid chain: Large ribosomal subunit protein uL29 (62 aa).

Belongs to the universal ribosomal protein uL29 family.

This is Large ribosomal subunit protein uL29 from Laribacter hongkongensis (strain HLHK9).